The sequence spans 257 residues: Protein orai-2 (257 aa).

A run of 4 helical transmembrane segments spans residues 62–79 (ASSRTSALLSGFAMVAMV), 94–114 (LIAFSACTTVLVAVHLFALLI), 156–176 (LGILLFLAEVVLLCWIKFLPI), and 201–221 (LVSTIIMVPVGIIFVIFTIHF).

This sequence belongs to the Orai family.

It is found in the membrane. Ca(2+) release-activated Ca(2+)-like (CRAC-like) channel subunit which mediates Ca(2+) influx and increase in Ca(2+)-selective current by synergy with the Ca(2+) sensor, stim1. This is Protein orai-2 (orai2) from Xenopus laevis (African clawed frog).